Consider the following 129-residue polypeptide: MNSSTSLMCFALLLISPLCMGYSDEDREADSRRIAEIIQNAQDDDAKINSTQELLDIYRRLYPSLSLEDRENIDKFVNEHTDAIVIDGVPIQGGRKAKIIGKIVSPAAKGLAVGFFEELGSKIAQLFTG.

An N-terminal signal peptide occupies residues 1-21; it reads MNSSTSLMCFALLLISPLCMG. N49 is a glycosylation site (N-linked (GlcNAc...) asparagine).

This sequence belongs to the Turandot family.

Its subcellular location is the secreted. Functionally, a humoral factor that plays a role in stress tolerance; gives increased resistance to the lethal effects of bacterial challenge and stress. Regulated by the JAK/STAT pathway and NF-KB-like Relish pathway in the fat body, upd3 in the hemocytes and Mekk1 in response to septic injury and consequent immune response. The protein is Protein Turandot A2 (TotA2) of Drosophila simulans (Fruit fly).